Here is a 104-residue protein sequence, read N- to C-terminus: Small ribosomal subunit protein bS16 (104 aa).

It belongs to the bacterial ribosomal protein bS16 family.

This chain is Small ribosomal subunit protein bS16, found in Gemmatimonas aurantiaca (strain DSM 14586 / JCM 11422 / NBRC 100505 / T-27).